The following is a 270-amino-acid chain: Aliphatic sulfonates import ATP-binding protein SsuB 3 (270 aa).

The ABC transporter domain maps to 17-238 (LAVQNLKKAF…ARGSHRLAAL (222 aa)). Residue 49-56 (GRSGCGKS) coordinates ATP.

It belongs to the ABC transporter superfamily. Aliphatic sulfonates importer (TC 3.A.1.17.2) family. The complex is composed of two ATP-binding proteins (SsuB), two transmembrane proteins (SsuC) and a solute-binding protein (SsuA).

The protein resides in the cell inner membrane. It catalyses the reaction ATP + H2O + aliphatic sulfonate-[sulfonate-binding protein]Side 1 = ADP + phosphate + aliphatic sulfonateSide 2 + [sulfonate-binding protein]Side 1.. Functionally, part of the ABC transporter complex SsuABC involved in aliphatic sulfonates import. Responsible for energy coupling to the transport system. This is Aliphatic sulfonates import ATP-binding protein SsuB 3 from Pseudomonas syringae pv. tomato (strain ATCC BAA-871 / DC3000).